We begin with the raw amino-acid sequence, 815 residues long: Serotype-specific mannosyltransferase WbdA (815 aa).

The alpha-(1-&gt;2)-mannosyltransferase stretch occupies residues 1–374; sequence MSRAIIENAG…WANTAHLAIE (374 aa). Positions 431–804 are alpha-(1-&gt;3)-mannosyltransferase; sequence KLLVDISVLA…WKQSAEFLLK (374 aa).

This sequence belongs to the glycosyltransferase group 1 family. Glycosyltransferase 4 subfamily. As to quaternary structure, monomer. Interacts with the C-terminal region of WbdD.

The protein localises to the cell inner membrane. The catalysed reaction is [alpha-D-Man-(1-&gt;3)-alpha-D-Man-(1-&gt;3)-alpha-D-Man-(1-&gt;2)-alpha-D-Man-(1-&gt;2)](n)-alpha-D-Man-(1-&gt;3)-alpha-D-Man-(1-&gt;3)-alpha-D-Man-(1-&gt;3)-alpha-D-GlcNAc-di-trans,octa-cis-undecaprenyl diphosphate + 2 GDP-alpha-D-mannose = alpha-D-Man-(1-&gt;2)-alpha-D-Man-(1-&gt;2)-[alpha-D-Man-(1-&gt;3)-alpha-D-Man-(1-&gt;3)-alpha-D-Man-(1-&gt;2)-alpha-D-Man-(1-&gt;2)](n)-alpha-D-Man-(1-&gt;3)-alpha-D-Man-(1-&gt;3)-alpha-D-Man-(1-&gt;3)-alpha-D-GlcNAc-di-trans,octa-cis-undecaprenyl diphosphate + 2 GDP + 2 H(+). It carries out the reaction alpha-D-Man-(1-&gt;2)-alpha-D-Man-(1-&gt;2)-[alpha-D-Man-(1-&gt;3)-alpha-D-Man-(1-&gt;3)-alpha-D-Man-(1-&gt;2)-alpha-D-Man-(1-&gt;2)](n)-alpha-D-Man-(1-&gt;3)-alpha-D-Man-(1-&gt;3)-alpha-D-Man-(1-&gt;3)-alpha-D-GlcNAc-di-trans,octa-cis-undecaprenyl diphosphate + 2 GDP-alpha-D-mannose = [alpha-D-Man-(1-&gt;3)-alpha-D-Man-(1-&gt;3)-alpha-D-Man-(1-&gt;2)-alpha-D-Man-(1-&gt;2)](n+1)-alpha-D-Man-(1-&gt;3)-alpha-D-Man-(1-&gt;3)-alpha-D-Man-(1-&gt;3)-alpha-D-GlcNAc-di-trans,octa-cis-undecaprenyl diphosphate + 2 GDP + 2 H(+). Its pathway is bacterial outer membrane biogenesis; LPS O-antigen biosynthesis. Mannosyltransferase involved in the biosynthesis of the repeat unit of the lipopolysaccharide (LPS) O-antigen region. Catalyzes the polymerization of a tetrasaccharide repeat unit containing two alpha-(1-&gt;3)- and two alpha-(1-&gt;2)-linked mannopyranose residues. The sequence is that of Serotype-specific mannosyltransferase WbdA from Escherichia coli.